We begin with the raw amino-acid sequence, 190 residues long: Ion-translocating oxidoreductase complex subunit B (190 aa).

The segment at 1-26 (MTALWIAIAALSALGLLFGLVLGYAA) is hydrophobic. Residues 32–90 (EEDPVAEQVDEILPQSQCGQCGYPGCRPYAEAVANGEMINKCAPGGEQVMLKLAELLNV) form the 4Fe-4S domain. Cysteine 49, cysteine 52, cysteine 57, cysteine 73, cysteine 115, cysteine 118, cysteine 121, cysteine 125, cysteine 145, cysteine 148, cysteine 151, and cysteine 155 together coordinate [4Fe-4S] cluster. 4Fe-4S ferredoxin-type domains follow at residues 106–135 (QVAYIDEANCIGCTKCIQACPVDAIVGATR) and 136–165 (AMHTVITDLCTGCDLCVAPCPTDCIEMRPV).

This sequence belongs to the 4Fe4S bacterial-type ferredoxin family. RnfB subfamily. The complex is composed of six subunits: RnfA, RnfB, RnfC, RnfD, RnfE and RnfG. [4Fe-4S] cluster serves as cofactor.

The protein resides in the cell inner membrane. Part of a membrane-bound complex that couples electron transfer with translocation of ions across the membrane. The chain is Ion-translocating oxidoreductase complex subunit B from Serratia proteamaculans (strain 568).